The sequence spans 442 residues: F-box protein KIB2 (442 aa).

The 48-residue stretch at 62–109 (SKQPVLVLDLLRSILERLSFVDFHRGRCISLEWYSASESCLAVKNPTS) folds into the F-box domain. The short motif at 236–243 (HKKGDENY) is the Nuclear localization signal element.

As to quaternary structure, interacts with ASK7/BIN2/SK21.

It localises to the cytoplasm. It is found in the nucleus. The protein localises to the nucleolus. Functionally, component of SCF(ASK-cullin-F-box) E3 ubiquitin ligase complexes, which may mediate the ubiquitination and subsequent proteasomal degradation of target proteins. Required for brassinosteroid (BR) signal transduction. Mediates ASK7/BIN2/SK21 inactivation both by competing with substrate binding (e.g. BZR1) and by promoting its ubiquitination and subsequent proteasomal degradation. The chain is F-box protein KIB2 from Arabidopsis thaliana (Mouse-ear cress).